The sequence spans 397 residues: Troponin T, skeletal muscle (397 aa).

Positions 1–16 are enriched in acidic residues; sequence MSDDEEYTSSEEEEVV. Disordered stretches follow at residues 1–148, 234–261, and 294–397; these read MSDD…NFTI, ERQK…YPPK, and DSNE…EEEE. 3 stretches are compositionally biased toward basic and acidic residues: residues 37–77, 84–129, and 136–148; these read EFIK…LKEK, TRAE…EKKR, and MKDK…NFTI. Composition is skewed to basic and acidic residues over residues 294-307 and 319-329; these read DSNE…KEQY and FGERPGKKAGE. Over residues 331–397 the composition is skewed to acidic residues; it reads ETPEGEEDAK…EEEEEEEEEE (67 aa).

Belongs to the troponin T family. In terms of processing, some glutamate residues are polyglycylated by TTLL3B. This modification occurs exclusively on glutamate residues and results in polyglycine chains on the gamma-carboxyl group. As to expression, isoform 3 is expressed in the hypoderm. Isoform 8 is expressed in the dorsal vessel. Isoform 6 is expressed in adult TDT muscle and isoform 9 in adult IFM, flight and jump muscles.

Its function is as follows. Troponin T is the tropomyosin-binding subunit of troponin, the thin filament regulatory complex which confers calcium-sensitivity to striated muscle actomyosin ATPase activity. The sequence is that of Troponin T, skeletal muscle (up) from Drosophila melanogaster (Fruit fly).